Consider the following 303-residue polypeptide: MTSRTEAVKAYLLDLQDRICSALETEDGGARFVEDAWVRDAGGGGRTRVIGEGKVIEKGGVNFSHVFGAGLPPSASAHRPELAGRGFEALGVSLVIHPHNPHVPTSHANVRFFIAEKEGEEAVWWFGGGFDLTPYYGNEEDCVHWHRVAEQACAPFGADVYPRYKAWCDRYFHLKHRGEPRGIGGLFFDDLNEWDFDTCFAFMRAIGDAYVDAYLPIIQRRKDTPYTAKQREFQEYRRGRYVEFNLVYDRGTLFGLQSGGRTESILMSLPPQVRWGYDWKAEPGSEEARLTDYFLQDRDWLAQ.

Ser-93 provides a ligand contact to substrate. Residues His-97 and His-107 each contribute to the a divalent metal cation site. His-107 (proton donor) is an active-site residue. 109-111 (NVR) contacts substrate. A divalent metal cation-binding residues include His-146 and His-176. The segment at 241-276 (YVEFNLVYDRGTLFGLQSGGRTESILMSLPPQVRWG) is important for dimerization. 259 to 261 (GGR) provides a ligand contact to substrate.

The protein belongs to the aerobic coproporphyrinogen-III oxidase family. Homodimer. Requires a divalent metal cation as cofactor.

It localises to the cytoplasm. The enzyme catalyses coproporphyrinogen III + O2 + 2 H(+) = protoporphyrinogen IX + 2 CO2 + 2 H2O. The protein operates within porphyrin-containing compound metabolism; protoporphyrin-IX biosynthesis; protoporphyrinogen-IX from coproporphyrinogen-III (O2 route): step 1/1. In terms of biological role, involved in the heme biosynthesis. Catalyzes the aerobic oxidative decarboxylation of propionate groups of rings A and B of coproporphyrinogen-III to yield the vinyl groups in protoporphyrinogen-IX. The sequence is that of Oxygen-dependent coproporphyrinogen-III oxidase from Pseudomonas entomophila (strain L48).